We begin with the raw amino-acid sequence, 339 residues long: Large ribosomal subunit protein uL11m (339 aa).

It belongs to the universal ribosomal protein uL11 family.

It localises to the mitochondrion. This chain is Large ribosomal subunit protein uL11m (RPL11), found in Acanthamoeba castellanii (Amoeba).